Here is a 353-residue protein sequence, read N- to C-terminus: UDP-N-acetylenolpyruvoylglucosamine reductase (353 aa).

Residues 31–201 (LASHAPAFVA…GSVRFALPRP (171 aa)) enclose the FAD-binding PCMH-type domain. Residue arginine 177 is part of the active site. Catalysis depends on serine 250, which acts as the Proton donor. The active site involves glutamate 346.

It belongs to the MurB family. FAD is required as a cofactor.

It is found in the cytoplasm. The enzyme catalyses UDP-N-acetyl-alpha-D-muramate + NADP(+) = UDP-N-acetyl-3-O-(1-carboxyvinyl)-alpha-D-glucosamine + NADPH + H(+). Its pathway is cell wall biogenesis; peptidoglycan biosynthesis. Its function is as follows. Cell wall formation. In Bordetella parapertussis (strain 12822 / ATCC BAA-587 / NCTC 13253), this protein is UDP-N-acetylenolpyruvoylglucosamine reductase.